The following is a 385-amino-acid chain: MTTIFYAEPELVIAYGRKVLFLNPNDLQIFKDIELPADLTSCGLKITAPEISEEQQSTSEGKGTDGGKVEVAILNVCYSPDRQLIALTTAGQKALLLYKSRPEHAKLLSVRALARASSAMTFAADSSSVLVTDKTGDCYQYDCVEVNALPRLLLGHLSIVYDILWTPDQKHIITSDRDDKIRVTNYPATFDIHSYCLGHKEFVSGLALLTEEHLLSVSGDKTLRLWNYLSGMELLHHDLPAPAVRLHMRELLPAKRYQAAVQFYDHIEAIGLYELEQTNNIWTVACEQLVRAEAGSWNISNFALTSDMIYVAGAVNEHLALRVYNASDGEQAKTVPAGWLDMVTGSFSDQTCVPEDLSVWFKKRYDNVSDYMERKKRRIEGQQQK.

WD repeat units follow at residues Lys-68 to Leu-108, Gly-155 to Ser-194, and Gly-198 to His-236.

Belongs to the WD repeat TRM82 family. In terms of assembly, forms a heterodimer with the catalytic subunit Mettl1. Interacts with mei-P26 and weakly interacts with bgcn; required for the function or formation of the mei-P26-bgcn-bam-sxl complex. Interacts with nanos; may be involved in mei-P26-dependent derepression of the BMP signaling pathway. Interacts with Myc; the interaction may be mediated by mei-P26 and may be involved in the regulation of ribosome biogenesis. In terms of tissue distribution, in testis, it is present at high level in hub cells, a niche for germline stem cells of testis. Ubiquitously expressed in all testicular cells throughout spermatogenesis. Ubiquitously expressed in all germline and somatic cells of the ovary.

It localises to the nucleus. It is found in the cytoplasm. It functions in the pathway tRNA modification; N(7)-methylguanine-tRNA biosynthesis. Required for the Mettl1-dependent formation of N(7)-methylguanine at position 46 (m7G46) in tRNA. In the Mettl1-wuho methyltransferase complex, it is required to stabilize and induce conformational changes of the catalytic subunit. Required for binding of nanos mRNA and repression of translation by the mei-P26-bgcn-bam-sxl complex. May cooperate with mei-P26 and nanos to derepress the BMP signaling pathway. May cooperate with mei-P26 to suppress expression of a subset of microRNAs. May cooperate with mei-P26 to regulate bam expression levels in germline cells during gametogenesis. Required to promote mitosis to meiosis transition during gametogenesis. May regulate germline cell division in part by regulating ribosome biogenesis. This Drosophila grimshawi (Hawaiian fruit fly) protein is tRNA (guanine-N(7)-)-methyltransferase non-catalytic subunit wuho.